The chain runs to 246 residues: Cold-regulated protein 27 (246 aa).

Disordered regions lie at residues 1-39 (MVGD…MYSA) and 151-232 (EPEN…VVPL). Low complexity predominate over residues 168–180 (SSGSASSLKQLSS).

Its subcellular location is the nucleus. Functionally, together with COR28, involved in central circadian clock regulation and in flowering promotion, by binding to the chromatin of clock-associated evening genes TOC1, PRR5, ELF4 and cold-responsive genes in order to repress their transcription. Negative regulator of freezing tolerance. This chain is Cold-regulated protein 27, found in Arabidopsis thaliana (Mouse-ear cress).